The primary structure comprises 347 residues: Ceramide very long chain fatty acid hydroxylase scs7 (347 aa).

Residues 1–156 (MASVTSEKCV…GNFLEPLTKT (156 aa)) lie on the Cytoplasmic side of the membrane. A helical transmembrane segment spans residues 157-177 (PWYMIPLIWVPCVTYGFLYAC). Position 178 (Thr-178) is a topological domain, lumenal. A helical membrane pass occupies residues 179–199 (GIPFSVAITFFIIGLFTWTLV). Over 200–238 (EYTMHRFLFHLDEYTPDHPIFLTMHFAFHGCHHFLPADK) the chain is Cytoplasmic. Positions 204, 209, 228, 231, and 232 each coordinate Zn(2+). A helical transmembrane segment spans residues 239 to 259 (YRLVMPPALFLIFATPWYHFI). A topological domain (lumenal) is located at residue Gln-260. Residues 261-281 (LVLPHYIGVAGFSGAILGYVF) form a helical membrane-spanning segment. Residues 282 to 347 (YDLTHYFLHH…EQGKISTKAK (66 aa)) are Cytoplasmic-facing. The Zn(2+) site is built by His-286, His-290, His-306, His-309, and His-310.

It belongs to the sterol desaturase family. SCS7 subfamily. Zn(2+) is required as a cofactor.

It localises to the endoplasmic reticulum membrane. It functions in the pathway sphingolipid metabolism. Functionally, ceramide hydroxylase involved in the hydroxylation of sphingolipid-associated very long chain fatty acids. Postulated to hydroxylate the very long chain fatty acid of dihydroceramides and phytoceramides at C-2. This Schizosaccharomyces pombe (strain 972 / ATCC 24843) (Fission yeast) protein is Ceramide very long chain fatty acid hydroxylase scs7.